A 64-amino-acid chain; its full sequence is Sperm protamine P1 (64 aa).

A disordered region spans residues 1–64 (MVRYRRHSRS…QSRRRRRRRY (64 aa)).

The protein belongs to the protamine P1 family. Testis.

The protein resides in the nucleus. Its subcellular location is the chromosome. Its function is as follows. Protamines substitute for histones in the chromatin of sperm during the haploid phase of spermatogenesis. They compact sperm DNA into a highly condensed, stable and inactive complex. This is Sperm protamine P1 (PRM1) from Dromiciops gliroides (Monito del Monte).